The primary structure comprises 171 residues: Der GTPase-activating protein YihI (171 aa).

2 disordered regions span residues 1-99 (MKKP…PQAE) and 145-171 (GLSY…KGGN). Positions 20-30 (TREELNQEARD) are enriched in basic and acidic residues. Residues 40 to 59 (HSAGSRANGSSASGSTAQNS) show a composition bias toward low complexity. Residues 148 to 160 (YEDDEDDEEEEKQ) are compositionally biased toward acidic residues.

Belongs to the YihI family. In terms of assembly, interacts with Der.

Functionally, a GTPase-activating protein (GAP) that modifies Der/EngA GTPase function. May play a role in ribosome biogenesis. The chain is Der GTPase-activating protein YihI from Enterobacter sp. (strain 638).